The chain runs to 1042 residues: Protein phosphatase Slingshot homolog 1 (1042 aa).

Over residues 1 to 12 (MALVTLQRSPTP) the composition is skewed to polar residues. The segment at 1–29 (MALVTLQRSPTPSAASSSASNSELEAGSD) is disordered. N-acetylalanine is present on alanine 2. The span at 13–22 (SAASSSASNS) shows a compositional bias: low complexity. Phosphoserine occurs at positions 37 and 57. A DEK-C domain is found at 249–304 (ERTERLIKAKLRSIMMSQDLENVTSKEIRNELEKQMNCNLKEFKEFIDNEMLLILG). The Tyrosine-protein phosphatase domain maps to 308-449 (KPSLIFDHLY…LSEYEGILDA (142 aa)). The active-site Phosphocysteine intermediate is the cysteine 393. A Phosphoserine modification is found at serine 516. Disordered regions lie at residues 576–609 (FGNSKPRSDSLPQVEELEKDGSPRTGRWRRASTQ), 668–766 (MERH…PHCD), 858–900 (IPEE…LDHT), and 915–942 (PTSSSISSNLTRSSSSDSIHSVRGKPGL). Polar residues predominate over residues 675–693 (SSSAICTQPTFLPHVTSSP). Residues 697 to 712 (ASSRSRAPERPASGPA) are compositionally biased toward low complexity. Residues 886 to 900 (LQKSPTSTLPRLDHT) are compositionally biased toward polar residues. Residue serine 889 is modified to Phosphoserine. Residues 889–1042 (SPTSTLPRLD…LKSPSRVNKS (154 aa)) are interaction with YWHAG. Low complexity predominate over residues 917-935 (SSSISSNLTRSSSSDSIHS). Serine 970 is subject to Phosphoserine. Residues 985–995 (SSEADTSTIAD) show a composition bias toward polar residues. The tract at residues 985–1042 (SSEADTSTIADSQDAKCGLSSSFLPEPQSAPRDPAATSKSSGKSAPEHLKSPSRVNKS) is disordered.

It belongs to the protein-tyrosine phosphatase family. As to quaternary structure, interacts with the 14-3-3 proteins YWHAB, YWHAG, YWHAQ, and YWHAZ. Interaction with 14-3-3 proteins inhibits phosphatase activity and also blocks recruitment to lamellipodia and stimulation by actin. Interacts with actin and this stimulates phosphatase activity. Interacts with LIMK1. In terms of processing, phosphorylated. Inhibitory phosphorylation by PAK4 promotes binding to YWHAZ. Phosphorylation at Ser-970 is decreased by stimuli which promote actin reorganization and lamellipodia formation. Can be dephosphorylated and activated by PPP3CA/calcineurin A. Phosphorylation decreases immediately prior to telophase. In terms of tissue distribution, expressed in brain, heart, kidney and thymus. Also expressed at lower levels in liver, skeletal muscle, small intestine and spleen.

The protein resides in the cytoplasm. It is found in the cytoskeleton. Its subcellular location is the cleavage furrow. It localises to the midbody. It catalyses the reaction O-phospho-L-tyrosyl-[protein] + H2O = L-tyrosyl-[protein] + phosphate. It carries out the reaction O-phospho-L-seryl-[protein] + H2O = L-seryl-[protein] + phosphate. The catalysed reaction is O-phospho-L-threonyl-[protein] + H2O = L-threonyl-[protein] + phosphate. In terms of biological role, protein phosphatase which regulates actin filament dynamics. Dephosphorylates and activates the actin binding/depolymerizing factor cofilin, which subsequently binds to actin filaments and stimulates their disassembly. Inhibitory phosphorylation of cofilin is mediated by LIMK1, which may also be dephosphorylated and inactivated by this protein. The protein is Protein phosphatase Slingshot homolog 1 of Mus musculus (Mouse).